The primary structure comprises 1211 residues: DNA-directed RNA polymerase subunit beta' (1211 aa).

Residues cysteine 60, cysteine 62, cysteine 75, and cysteine 78 each coordinate Zn(2+). Aspartate 450, aspartate 452, and aspartate 454 together coordinate Mg(2+). Zn(2+) contacts are provided by cysteine 819, cysteine 893, cysteine 900, and cysteine 903.

The protein belongs to the RNA polymerase beta' chain family. The RNAP catalytic core consists of 2 alpha, 1 beta, 1 beta' and 1 omega subunit. When a sigma factor is associated with the core the holoenzyme is formed, which can initiate transcription. Mg(2+) serves as cofactor. The cofactor is Zn(2+).

The enzyme catalyses RNA(n) + a ribonucleoside 5'-triphosphate = RNA(n+1) + diphosphate. Functionally, DNA-dependent RNA polymerase catalyzes the transcription of DNA into RNA using the four ribonucleoside triphosphates as substrates. This Streptococcus equi subsp. equi (strain 4047) protein is DNA-directed RNA polymerase subunit beta'.